The sequence spans 140 residues: FLYWCH family member 2 (140 aa).

Disordered stretches follow at residues 1 to 39 and 83 to 140; these read MPLP…PREF and THPE…GKSL. Serine 21 carries the post-translational modification Phosphoserine. Positions 98 to 114 are enriched in basic and acidic residues; sequence PEQKRSRQDPGADRTED. Positions 118 to 127 are enriched in low complexity; sequence AAGPPEAAGE.

The sequence is that of FLYWCH family member 2 (FLYWCH2) from Pongo abelii (Sumatran orangutan).